We begin with the raw amino-acid sequence, 132 residues long: Fatty acid-binding protein, brain (132 aa).

At Val-2 the chain carries N-acetylvaline. A fatty acid is bound at residue Arg-127 to Tyr-129.

The protein belongs to the calycin superfamily. Fatty-acid binding protein (FABP) family. In terms of assembly, monomer.

The protein localises to the cytoplasm. FABPs are thought to play a role in the intracellular transport of long-chain fatty acids and their acyl-CoA esters. Binds oleic and palmitic acids but not palmitoyl CoA. This is Fatty acid-binding protein, brain (FABP7) from Bos taurus (Bovine).